Consider the following 185-residue polypeptide: Elongation factor P (185 aa).

This sequence belongs to the elongation factor P family.

Its subcellular location is the cytoplasm. It functions in the pathway protein biosynthesis; polypeptide chain elongation. In terms of biological role, involved in peptide bond synthesis. Stimulates efficient translation and peptide-bond synthesis on native or reconstituted 70S ribosomes in vitro. Probably functions indirectly by altering the affinity of the ribosome for aminoacyl-tRNA, thus increasing their reactivity as acceptors for peptidyl transferase. The chain is Elongation factor P from Mesomycoplasma hyopneumoniae (strain J / ATCC 25934 / NCTC 10110) (Mycoplasma hyopneumoniae).